The sequence spans 581 residues: Activating signal cointegrator 1 (581 aa).

Ala-2 is modified (N-acetylalanine). The segment at 97–118 is disordered; that stretch reads KSGDHLKRGRKKGRNRQEVPAF. The segment at 171-187 adopts a C4-type zinc-finger fold; sequence CDCLGQKHKLINNCLIC. Residues 200–300 are mediates interaction with DDRGK1; sequence CLFCGTLVCT…ASDSNQWLSK (101 aa). Ser-276 is modified (phosphoserine). Tyr-289 carries the post-translational modification Phosphotyrosine. The interval 300-400 is mediates interaction with UFL1; sequence KLERETLQKR…WVDHTGAASQ (101 aa). Glycyl lysine isopeptide (Lys-Gly) (interchain with G-Cter in UFM1) cross-links involve residues Lys-324, Lys-325, and Lys-334. A Phosphoserine modification is found at Ser-341. A Glycyl lysine isopeptide (Lys-Gly) (interchain with G-Cter in UFM1) cross-link involves residue Lys-367. In terms of domain architecture, ASCH spans 437–531; sequence LSVHQPWASL…FKEQFPDISQ (95 aa).

As to quaternary structure, interacts with the thyroid hormone receptor/TR (via the ligand-binding domain); this interaction requires the presence of thyroid hormone. Interacts with the androgen receptor/AR; in an androgen, testosterone and dihydrotestosterone-dependent manner. Interacts with ESR1 (estrogen ligand-bound); competes with UFSP2. Interacts with UFSP2; competes with ligand-bound ESR1. Interacts with DDRGK1 and UFL1; the interaction with DDRGK1 is direct. Interacts with NCOA1. Interacts with EP300. Part of the ASC-1 complex, that contains TRIP4, ASCC1, ASCC2 and ASCC3. Identified in the RQT (ribosome quality control trigger) complex, that contains ASCC2, ASCC3 and TRIP4. Interacts with NEK6. Interacts with CSRP1. Interacts with ZCCHC4. Phosphorylated by NEK6. In terms of processing, polyufmylated by the UFM1-conjugating system composed of the enzymes UBA5, UFC1 and UFL1. Deufmylated by the protease UFSP2. Ufmylation of TRIP4 is promoted by ligand-bound nuclear receptors that compete with UFSP2 for interaction with TRIP4. Nuclear receptors-induced ufmylation promotes the recruitment of additional transcriptional coactivators like EP300 and NCOA1 and therefore the assembly of a coactivator complex facilitating nuclear receptor-mediated transcription.

The protein localises to the nucleus. Its subcellular location is the cytoplasm. It is found in the cytosol. The protein resides in the cytoskeleton. It localises to the microtubule organizing center. The protein localises to the centrosome. In terms of biological role, transcription coactivator which associates with nuclear receptors, transcriptional coactivators including EP300, CREBBP and NCOA1, and basal transcription factors like TBP and TFIIA to facilitate nuclear receptors-mediated transcription. May thereby play an important role in establishing distinct coactivator complexes under different cellular conditions. Plays a role in thyroid hormone receptor and estrogen receptor transactivation. Also involved in androgen receptor transactivation. Plays a pivotal role in the transactivation of NF-kappa-B, SRF and AP1. Acts as a mediator of transrepression between nuclear receptor and either AP1 or NF-kappa-B. May play a role in the development of neuromuscular junction. May play a role in late myogenic differentiation. Also functions as part of the RQC trigger (RQT) complex that activates the ribosome quality control (RQC) pathway, a pathway that degrades nascent peptide chains during problematic translation. This chain is Activating signal cointegrator 1, found in Homo sapiens (Human).